The chain runs to 85 residues: UPF0335 protein Oant_1161 (85 aa).

The protein belongs to the UPF0335 family.

The protein is UPF0335 protein Oant_1161 of Brucella anthropi (strain ATCC 49188 / DSM 6882 / CCUG 24695 / JCM 21032 / LMG 3331 / NBRC 15819 / NCTC 12168 / Alc 37) (Ochrobactrum anthropi).